The primary structure comprises 147 residues: Hemoglobin subunit beta (147 aa).

Position 2 is an N-acetylvaline (valine 2). Residues 3–147 form the Globin domain; sequence HMSAEEKGIV…VAAALAHKYH (145 aa). Threonine 13 bears the Phosphothreonine mark. Serine 45 carries the post-translational modification Phosphoserine. Position 60 is an N6-acetyllysine (lysine 60). Position 64 (histidine 64) interacts with heme b. An N6-acetyllysine modification is found at lysine 83. Residue histidine 93 coordinates heme b. Cysteine 94 carries the post-translational modification S-nitrosocysteine. Lysine 145 carries the N6-acetyllysine modification.

This sequence belongs to the globin family. As to quaternary structure, heterotetramer of two alpha chains and two beta chains. As to expression, red blood cells.

Its function is as follows. Involved in oxygen transport from the lung to the various peripheral tissues. The chain is Hemoglobin subunit beta (HBB) from Scalopus aquaticus (Eastern mole).